The sequence spans 238 residues: Pyridoxine 5'-phosphate synthase (238 aa).

N7 lines the 3-amino-2-oxopropyl phosphate pocket. 9 to 10 contributes to the 1-deoxy-D-xylulose 5-phosphate binding site; the sequence is DH. 3-amino-2-oxopropyl phosphate is bound at residue R18. H43 functions as the Proton acceptor in the catalytic mechanism. 1-deoxy-D-xylulose 5-phosphate contacts are provided by R45 and H50. E70 (proton acceptor) is an active-site residue. T100 is a binding site for 1-deoxy-D-xylulose 5-phosphate. The Proton donor role is filled by H191. 3-amino-2-oxopropyl phosphate contacts are provided by residues G192 and 213–214; that span reads GH.

The protein belongs to the PNP synthase family. Homooctamer; tetramer of dimers.

Its subcellular location is the cytoplasm. It carries out the reaction 3-amino-2-oxopropyl phosphate + 1-deoxy-D-xylulose 5-phosphate = pyridoxine 5'-phosphate + phosphate + 2 H2O + H(+). Its pathway is cofactor biosynthesis; pyridoxine 5'-phosphate biosynthesis; pyridoxine 5'-phosphate from D-erythrose 4-phosphate: step 5/5. In terms of biological role, catalyzes the complicated ring closure reaction between the two acyclic compounds 1-deoxy-D-xylulose-5-phosphate (DXP) and 3-amino-2-oxopropyl phosphate (1-amino-acetone-3-phosphate or AAP) to form pyridoxine 5'-phosphate (PNP) and inorganic phosphate. The polypeptide is Pyridoxine 5'-phosphate synthase (Syntrophobacter fumaroxidans (strain DSM 10017 / MPOB)).